We begin with the raw amino-acid sequence, 351 residues long: Inner kinetochore subunit fta2 (351 aa).

A disordered region spans residues 1 to 71; the sequence is MSGRRYSQIS…SSNGRVDTDR (71 aa). The span at 7-18 shows a compositional bias: low complexity; the sequence is SQISQQEGSSSS. The span at 54–66 shows a compositional bias: polar residues; the sequence is NENSGQSKSSNGR.

This sequence belongs to the CENP-P/CTF19 family. In terms of assembly, component of the heterotetrameric kinetochore subcomplex COMA, which consists of fta2, fta7, mal2 and mis17. The COMA subcomplex is part of a larger constitutive centromere-associated network (CCAN) (also known as central kinetochore Sim4 complex in fission yeast), which is composed of at least cnl2, cnp3, cnp20, fta1, fta2, fta3, fta4, fta6, fta7, mal2, mhf1, mhf2, mis6, mis15, mis17, sim4 and wip1.

Its subcellular location is the nucleus. It is found in the chromosome. The protein localises to the centromere. It localises to the kinetochore. Its function is as follows. Component of the kinetochore, a multiprotein complex that assembles on centromeric DNA and attaches chromosomes to spindle microtubules, mediating chromosome segregation and sister chromatid segregation during meiosis and mitosis. Component of the inner kinetochore COMA complex, which connects centromere-associated proteins and the outer kinetochore. COMA interacts with other inner kinetochore proteins to form the inner kinetochore constitutive centromere-associated network (CCAN), which serves as a structural platform for outer kinetochore assembly. Fta2, fta3 and fta4 associate with the central core (cnt) and inner repeat (inr) region of the centromere. This is Inner kinetochore subunit fta2 (fta2) from Schizosaccharomyces pombe (strain 972 / ATCC 24843) (Fission yeast).